A 353-amino-acid chain; its full sequence is Protein RecA (353 aa).

Glycine 75 to threonine 82 lines the ATP pocket.

It belongs to the RecA family.

The protein resides in the cytoplasm. Functionally, can catalyze the hydrolysis of ATP in the presence of single-stranded DNA, the ATP-dependent uptake of single-stranded DNA by duplex DNA, and the ATP-dependent hybridization of homologous single-stranded DNAs. It interacts with LexA causing its activation and leading to its autocatalytic cleavage. The sequence is that of Protein RecA from Cupriavidus pinatubonensis (strain JMP 134 / LMG 1197) (Cupriavidus necator (strain JMP 134)).